A 352-amino-acid chain; its full sequence is C-X-C chemokine receptor type 4 (352 aa).

Residues 1–21 (MEGISIYTSDNYTEEMGSGDY) form an important for chemokine binding and signaling region. The Extracellular segment spans residues 1 to 38 (MEGISIYTSDNYTEEMGSGDYDSIKEPCFREENAHFNR). Y7 is subject to Sulfotyrosine. N-linked (GlcNAc...) asparagine glycosylation is present at N11. Sulfotyrosine is present on Y12. O-linked (Xyl...) (chondroitin sulfate) serine glycosylation occurs at S18. Y21 carries the sulfotyrosine modification. Disulfide bonds link C28–C274 and C109–C186. A helical membrane pass occupies residues 39–63 (IFLPTIYSIIFLTGIVGNGLVILVM). At 64 to 77 (GYQKKLRSMTDKYR) the chain is on the cytoplasmic side. The chain crosses the membrane as a helical span at residues 78–99 (LHLSVADLLFVITLPFWAVDAV). A chemokine binding region spans residues 94 to 97 (WAVD). The Extracellular segment spans residues 100-110 (ANWYFGNFLCK). Residues 111-130 (AVHVIYTVNLYSSVLILAFI) form a helical membrane-spanning segment. The segment at 113 to 117 (HVIYT) is chemokine binding. Residues 131–154 (SLDRYLAIVHATNSQKPRKLLAEK) are Cytoplasmic-facing. The Important for signaling motif lies at 133 to 135 (DRY). Positions 135–147 (YLAIVHATNSQKP) are involved in dimerization; when bound to chemokine. The chain crosses the membrane as a helical span at residues 155-174 (VVYVGVWIPALLLTIPDFIF). Topologically, residues 175–195 (ASVSEADDRYICDRFYPNDLW) are extracellular. The tract at residues 186 to 190 (CDRFY) is chemokine binding, important for signaling. An involved in dimerization region spans residues 191-210 (PNDLWVVVFQFQHIMVGLIL). Residues 196 to 216 (VVVFQFQHIMVGLILPGIVIL) form a helical membrane-spanning segment. Over 217-241 (SCYCIIISKLSHSKGHQKGKALKTT) the chain is Cytoplasmic. A helical transmembrane segment spans residues 242–261 (VILILAFFACWLPYYIGISI). At 262-282 (DSFILLEIIKQGCEFENTVHK) the chain is on the extracellular side. Residues 266–268 (LLE) form an involved in dimerization region. A helical membrane pass occupies residues 283–302 (WISITEALAFFHCCLNPILY). The Cytoplasmic portion of the chain corresponds to 303-352 (AFLGAKFKTSAQHALTSVSRGSSLKILSKGKRGGHSSVSTESESSSFHSS). S319 and S321 each carry phosphoserine. A phosphoserine; by PKC and GRK6 mark is found at S324 and S325. Residues 329–352 (LSKGKRGGHSSVSTESESSSFHSS) are disordered. S330 is subject to Phosphoserine; by GRK6. Residue K331 forms a Glycyl lysine isopeptide (Lys-Gly) (interchain with G-Cter in ubiquitin) linkage. The segment covering 337–352 (HSSVSTESESSSFHSS) has biased composition (low complexity). A Phosphoserine; by GRK6 modification is found at S339. Residues S348 and S351 each carry the phosphoserine modification.

Belongs to the G-protein coupled receptor 1 family. In terms of assembly, monomer. Can form homodimers. Interacts with CD164. Interacts with ARRB2; the interaction is dependent on the C-terminal phosphorylation of CXCR4 and allows activation of MAPK1 and MAPK3. Interacts with ARR3; the interaction is dependent on the C-terminal phosphorylation of CXCR4 and modulates calcium mobilization. Interacts with RNF113A; the interaction, enhanced by CXCL12, promotes CXCR4 ubiquitination and subsequent degradation. Interacts (via the cytoplasmic C-terminal) with ITCH (via the WW domains I and II); the interaction, enhanced by CXCL12, promotes CXCR4 ubiquitination and leads to its degradation. Interacts with extracellular ubiquitin. Interacts with DBN1; this interaction is enhanced by antigenic stimulation. Following LPS binding, may form a complex with GDF5, HSP90AA1 and HSPA8. Phosphorylated on agonist stimulation. Rapidly phosphorylated on serine and threonine residues in the C-terminal. Phosphorylation at Ser-324 and Ser-325 leads to recruitment of ITCH, ubiquitination and protein degradation. In terms of processing, ubiquitinated after ligand binding, leading to its degradation. Ubiquitinated by ITCH at the cell membrane on agonist stimulation. The ubiquitin-dependent mechanism, endosomal sorting complex required for transport (ESCRT), then targets CXCR4 for lysosomal degradation. This process is dependent also on prior Ser-/Thr-phosphorylation in the C-terminal of CXCR4. Also binding of ARRB1 to STAM negatively regulates CXCR4 sorting to lysosomes though modulating ubiquitination of SFR5S. Post-translationally, sulfation is required for efficient binding of CXCL12/SDF-1alpha and promotes its dimerization. O- and N-glycosylated. N-glycosylation can mask coreceptor function. The O-glycosylation chondroitin sulfate attachment does not affect interaction with CXCL12/SDF-1alpha nor its coreceptor activity.

The protein localises to the cell membrane. The protein resides in the cell junction. It localises to the early endosome. It is found in the late endosome. Its subcellular location is the lysosome. Functionally, receptor for the C-X-C chemokine CXCL12/SDF-1 that transduces a signal by increasing intracellular calcium ion levels and enhancing MAPK1/MAPK3 activation. Involved in the AKT signaling cascade. Plays a role in regulation of cell migration, e.g. during wound healing. Acts as a receptor for extracellular ubiquitin; leading to enhanced intracellular calcium ions and reduced cellular cAMP levels. Binds bacterial lipopolysaccharide (LPS) et mediates LPS-induced inflammatory response, including TNF secretion by monocytes. Involved in hematopoiesis and in cardiac ventricular septum formation. Also plays an essential role in vascularization of the gastrointestinal tract, probably by regulating vascular branching and/or remodeling processes in endothelial cells. Involved in cerebellar development. In the CNS, could mediate hippocampal-neuron survival. This is C-X-C chemokine receptor type 4 (CXCR4) from Chlorocebus aethiops (Green monkey).